Consider the following 287-residue polypeptide: Ventral anterior homeobox 1b (287 aa).

A compositionally biased stretch (basic and acidic residues) spans methionine 1–glutamine 33. Residues methionine 1–serine 55 form a disordered region. Residues proline 89–glutamine 148 constitute a DNA-binding region (homeobox).

Belongs to the EMX homeobox family.

The protein localises to the nucleus. In terms of biological role, involved in ventral eye development. This chain is Ventral anterior homeobox 1b (vax1-b), found in Xenopus laevis (African clawed frog).